A 574-amino-acid polypeptide reads, in one-letter code: Cyclomaltodextrinase (574 aa).

Positions 144, 146, 149, 150, 168, and 170 each coordinate Ca(2+). Positions 243 and 323 each coordinate substrate. The Nucleophile role is filled by D325. The Proton donor role is filled by E354. Residues 420–421 (HD), D465, and R469 contribute to the substrate site.

Belongs to the glycosyl hydrolase 13 family. In terms of assembly, monomer. Ca(2+) is required as a cofactor.

It carries out the reaction cyclomaltodextrin + H2O = linear maltodextrin. Its function is as follows. Hydrolyzes cyclodextrins. Can also act on linear maltodextrins, with the exception of maltose. This is Cyclomaltodextrinase from Thermoanaerobacter pseudethanolicus (strain ATCC 33223 / 39E) (Clostridium thermohydrosulfuricum).